We begin with the raw amino-acid sequence, 305 residues long: Cysteine synthase (305 aa).

An N6-(pyridoxal phosphate)lysine modification is found at K45. Pyridoxal 5'-phosphate is bound by residues N75, 179–183, and S266; that span reads GSGGT.

This sequence belongs to the cysteine synthase/cystathionine beta-synthase family. Homodimer. The cofactor is pyridoxal 5'-phosphate.

It carries out the reaction O-acetyl-L-serine + hydrogen sulfide = L-cysteine + acetate. It functions in the pathway amino-acid biosynthesis; L-cysteine biosynthesis; L-cysteine from L-serine: step 2/2. This Helicobacter pylori (strain J99 / ATCC 700824) (Campylobacter pylori J99) protein is Cysteine synthase (cysM).